The following is a 681-amino-acid chain: MSPAPMPVTTAEQDRDVVVIDAVVEEVRPPRLPKSHLEDLGPVSDMFPESWEYHPDLIMEFYRKRPLQVLGRLINILFPLLRFILGIWWEKLRGKDPTVSRAKAIQLRELLTNLGPTYIKVGQALSTRPDLVPPVFLDELTTLQDQLPSFPNEVAYRFIEEELGAPAEEIYAELSPEPIAAASLGQVYKGKLKTGEAVAVKVQRPDLVRRITLDIYIMRSLSLWARRSVKRLRSDLVAITDELASRVFEEMNYYQEAINGEKFAQLYGSLPEIYVPSIYWQYTGRRVLTMEWVEGIKLTNIKAIQAQGIDATHLVEVGVQCSLRQLLEHGFFHADPHPGNLLAMADGRLAYLDFGMMSTIQPYQRYGLIEAVVHLVNRDFDSLAKDYVKLDFLKPDTDLKPIIPALGQVFGNALGASVAELNFKSITDQMSAMMYEFPFRVPAYYALIIRSMVTLEGIAIGIDPNFKVLSKAYPYIAKRLLTDQSEELRTSLKELLFKEGSFRWNRLENLLRNAKNSPGFDFDYVLNEATEFLLSDRGQFIRDRLVAELVNSIDQLGRNTWQQVSHNIQERISFLGDLGNGNGKAHQTKTIKVVPQPAIAQQEETWQHLQNLWQILKETPGFDPLKFVPVLSQIIVNPTSRRMGQQVAEGLLQKAIARVIRQWALALESQPNPAIKIRNAA.

This sequence belongs to the protein kinase superfamily. ADCK protein kinase family.

This is an uncharacterized protein from Synechocystis sp. (strain ATCC 27184 / PCC 6803 / Kazusa).